Consider the following 733-residue polypeptide: Protein ROG3 (733 aa).

Residues 460 to 463 carry the PY-motif motif; the sequence is PPNY. Residues 518 to 566 form a disordered region; it reads RDNLGLPPSASSAAASRSLSPLLNVPAPEDGTERILPQSALGPNSGSVP. Residues 523–540 show a composition bias toward low complexity; that stretch reads LPPSASSAAASRSLSPLL. A PY-motif motif is present at residues 625 to 628; the sequence is PPSY. 2 disordered regions span residues 636–658 and 693–733; these read QPRK…SIPT and ELTS…GNKR. The segment covering 646–658 has biased composition (low complexity); the sequence is RNSSTTLSSSIPT.

The protein belongs to the arrestin family. In terms of assembly, interacts with RSP5 via its 2 PY-motifs.

Functionally, involved in resistance to GST substrate o-dinitrobenzene (o-DNB). This Saccharomyces cerevisiae (strain ATCC 204508 / S288c) (Baker's yeast) protein is Protein ROG3 (ROG3).